The chain runs to 184 residues: ADP-ribosylation factor-like protein 3 (184 aa).

G2 is lipidated: N-myristoyl glycine. GTP-binding positions include 24-31 (GLDNAGKT), 68-72 (DIGGQ), and 127-130 (NKQD).

Belongs to the small GTPase superfamily. Arf family.

It is found in the golgi apparatus. Its function is as follows. GTP-binding protein that may be involved in protein trafficking; may modulate vesicle budding and uncoating within the Golgi apparatus. The sequence is that of ADP-ribosylation factor-like protein 3 (arl-3) from Caenorhabditis elegans.